A 131-amino-acid chain; its full sequence is Transcription antitermination protein NusB (131 aa).

The protein belongs to the NusB family.

Functionally, involved in transcription antitermination. Required for transcription of ribosomal RNA (rRNA) genes. Binds specifically to the boxA antiterminator sequence of the ribosomal RNA (rrn) operons. This Aliarcobacter butzleri (strain RM4018) (Arcobacter butzleri) protein is Transcription antitermination protein NusB.